The following is a 465-amino-acid chain: Monogalactosyldiacylglycerol synthase 3, chloroplastic (465 aa).

Residues histidine 86, arginine 255, 365–369 (GTIAE), and glutamate 387 contribute to the UDP site.

The protein belongs to the glycosyltransferase 28 family. Expressed mainly in roots. Detected in flowers, leaves, stems, siliques and pollen tubes.

The protein localises to the plastid. It localises to the chloroplast outer membrane. The catalysed reaction is a 1,2-diacyl-sn-glycerol + UDP-alpha-D-galactose = a 1,2-diacyl-3-O-(beta-D-galactosyl)-sn-glycerol + UDP + H(+). The enzyme catalyses 1,2-di-(9Z,12Z-octadecadienoyl)-sn-glycerol + UDP-alpha-D-galactose = 1,2-di-(9Z,12Z-octadecadienoyl)-3-beta-D-galactosyl-sn-glycerol + UDP + H(+). It carries out the reaction 1-(9Z-octadecenoyl)-2-hexadecanoyl-sn-glycerol + UDP-alpha-D-galactose = 1-(9Z-octadecenoyl)-2-hexadecanoyl-3-beta-D-galactosyl-sn-glycerol + UDP + H(+). It catalyses the reaction 1,2-di-(9Z-octadecenoyl)-sn-glycerol + UDP-alpha-D-galactose = 1,2-di-(9Z-octadecenoyl)-3-beta-D-galactosyl-sn-glycerol + UDP + H(+). With respect to regulation, inhibited by galvestine-1. Involved in the synthesis of monogalactosyldiacylglycerol, the major structural component of photosynthetic membranes and in the chloroplast envelope biogenesis. Can use both prokaryotic (18:1/16:0) or eukaryotic (18:2/18:2) 1,2-diacylglycerol species, but operates with some preference for the eukaryotic one. Plays a minor role in galactolipid synthesis in chloroplasts. Is essential for membrane lipid remodeling in phosphate-starved roots. Acts as the major factor involved in digalactosyldiacylglycerol (DGDG) biosynthesis in phosphate-starved roots. Does not seem to be required for plant growth under nutrient-sufficient conditions. Required for membrane lipid remodeling in plants grown in acidic conditions. The chain is Monogalactosyldiacylglycerol synthase 3, chloroplastic from Arabidopsis thaliana (Mouse-ear cress).